The sequence spans 487 residues: Glycogen synthase 1 (487 aa).

An ADP-alpha-D-glucose-binding site is contributed by K15.

This sequence belongs to the glycosyltransferase 1 family. Bacterial/plant glycogen synthase subfamily.

The enzyme catalyses [(1-&gt;4)-alpha-D-glucosyl](n) + ADP-alpha-D-glucose = [(1-&gt;4)-alpha-D-glucosyl](n+1) + ADP + H(+). The protein operates within glycan biosynthesis; glycogen biosynthesis. Its function is as follows. Synthesizes alpha-1,4-glucan chains using ADP-glucose. This chain is Glycogen synthase 1, found in Nitrosococcus oceani (strain ATCC 19707 / BCRC 17464 / JCM 30415 / NCIMB 11848 / C-107).